The primary structure comprises 85 residues: uncharacterized protein (85 aa).

Residues 1 to 85 (MRWRPSSWSA…DQEQCGQHCR (85 aa)) form a disordered region. A compositionally biased stretch (basic and acidic residues) spans 47–61 (ASVEGEGGRHADRHG).

This is an uncharacterized protein from Streptomyces lividans.